Here is a 138-residue protein sequence, read N- to C-terminus: Nucleoside diphosphate kinase (138 aa).

ATP contacts are provided by K10, F58, R86, T92, R103, and N113. The active-site Pros-phosphohistidine intermediate is H116.

The protein belongs to the NDK family. As to quaternary structure, homotetramer. Mg(2+) serves as cofactor.

Its subcellular location is the cytoplasm. It carries out the reaction a 2'-deoxyribonucleoside 5'-diphosphate + ATP = a 2'-deoxyribonucleoside 5'-triphosphate + ADP. The enzyme catalyses a ribonucleoside 5'-diphosphate + ATP = a ribonucleoside 5'-triphosphate + ADP. Its function is as follows. Major role in the synthesis of nucleoside triphosphates other than ATP. The ATP gamma phosphate is transferred to the NDP beta phosphate via a ping-pong mechanism, using a phosphorylated active-site intermediate. The chain is Nucleoside diphosphate kinase from Haemophilus ducreyi (strain 35000HP / ATCC 700724).